Here is a 391-residue protein sequence, read N- to C-terminus: Ribosomal RNA small subunit methyltransferase H (391 aa).

The tract at residues 1–23 is disordered; that stretch reads MDVDVQDDVQGRAGEGAEERAHD. S-adenosyl-L-methionine is bound by residues 59–61, Asp78, Leu112, Asp126, and Gln133; that span reads GGH. Residues 284–391 are disordered; sequence SSSSAPPDLP…EPGATVERTP (108 aa). Basic and acidic residues predominate over residues 368–380; it reads RTQEFETHPHLEP.

This sequence belongs to the methyltransferase superfamily. RsmH family.

It is found in the cytoplasm. The catalysed reaction is cytidine(1402) in 16S rRNA + S-adenosyl-L-methionine = N(4)-methylcytidine(1402) in 16S rRNA + S-adenosyl-L-homocysteine + H(+). Specifically methylates the N4 position of cytidine in position 1402 (C1402) of 16S rRNA. The sequence is that of Ribosomal RNA small subunit methyltransferase H from Kineococcus radiotolerans (strain ATCC BAA-149 / DSM 14245 / SRS30216).